Consider the following 99-residue polypeptide: Large ribosomal subunit protein bL21 (99 aa).

Belongs to the bacterial ribosomal protein bL21 family. Part of the 50S ribosomal subunit. Contacts protein L20.

Its function is as follows. This protein binds to 23S rRNA in the presence of protein L20. The chain is Large ribosomal subunit protein bL21 from Mycoplasma mobile (strain ATCC 43663 / 163K / NCTC 11711) (Mesomycoplasma mobile).